We begin with the raw amino-acid sequence, 209 residues long: Vacuolar protein sorting-associated protein 28 homolog (209 aa).

The 105-residue stretch at 1–105 (MSQNSNLMRE…REGRPITVKD (105 aa)) folds into the VPS28 N-terminal domain. A VPS28 C-terminal domain is found at 109 to 205 (NVLKHIASIV…AYQSFQKALN (97 aa)).

Belongs to the VPS28 family. As to quaternary structure, component of the ESCRT-I complex (endosomal sorting complex required for transport I).

It is found in the endosome. Its function is as follows. Component of the ESCRT-I complex, a regulator of vesicular trafficking process. The polypeptide is Vacuolar protein sorting-associated protein 28 homolog (Caenorhabditis briggsae).